Consider the following 554-residue polypeptide: Glutamine--tRNA ligase (554 aa).

The 'HIGH' region motif lies at 34-44 (PEPNGYLHIGH). ATP is bound by residues 35-37 (EPN) and 41-47 (HIGHAKS). D67 and Y212 together coordinate L-glutamine. ATP is bound by residues T231, 261-262 (RL), and 269-271 (MSK). The 'KMSKS' region signature appears at 268-272 (VMSKR). The interaction with tRNA stretch occupies residues 317–324 (TKQDNTIE).

This sequence belongs to the class-I aminoacyl-tRNA synthetase family. Monomer.

The protein resides in the cytoplasm. The enzyme catalyses tRNA(Gln) + L-glutamine + ATP = L-glutaminyl-tRNA(Gln) + AMP + diphosphate. The sequence is that of Glutamine--tRNA ligase from Escherichia coli O127:H6 (strain E2348/69 / EPEC).